The sequence spans 306 residues: Acetylglutamate kinase (306 aa).

Substrate is bound by residues Gly-75–Gly-76, Arg-97, and Asn-197.

This sequence belongs to the acetylglutamate kinase family. ArgB subfamily.

It is found in the cytoplasm. The catalysed reaction is N-acetyl-L-glutamate + ATP = N-acetyl-L-glutamyl 5-phosphate + ADP. Its pathway is amino-acid biosynthesis; L-arginine biosynthesis; N(2)-acetyl-L-ornithine from L-glutamate: step 2/4. In terms of biological role, catalyzes the ATP-dependent phosphorylation of N-acetyl-L-glutamate. The chain is Acetylglutamate kinase from Streptomyces coelicolor (strain ATCC BAA-471 / A3(2) / M145).